Consider the following 444-residue polypeptide: MPSIILPPKPTALQKPHINLAVVGHVDNGKSTLVGRLLYETGYVDEKGFKEIEEMAKKMGKEDFAFAWILDRFKEERERGVTIEATHVGFETNKLFITIIDLPGHRDFVKNMIVGASQADAALFVISARPGEFETAIGPQGQGREHLFLIRTLGIQQLVVAVNKMDVVNYDQKRYEQVKSEVSKLLKLLGYDPSKIHFVPVSAVKGDNVRTKSSNTPWYNGPTLLEVLDTFQPPPRPTDKPLRLPIQDVFSITGAGTVVVGRVETGVLKAGDRVVVVPPAKVGDVRSIETHHMKLEQAQPGDNVGVNVRGINKEDVKRGDVLGKVDNIPTVTEEIIARIVVLWHPTAIGPGYAPVMHIHTATVPVQITELISKLDPRTGQAVEQKPQFIKQGDVAIVKIKPLKPVVAEKFSDFPPLGRFALRDMGRTIAAGQILEVKPAQVQIK.

One can recognise a tr-type G domain in the interval 15–236 (KPHINLAVVG…VLDTFQPPPR (222 aa)). Residues 24–31 (GHVDNGKS) form a G1 region. Residue 24 to 31 (GHVDNGKS) participates in GTP binding. Position 31 (Ser-31) interacts with Mg(2+). Residues 80–84 (GVTIE) form a G2 region. Residues 101 to 104 (DLPG) are G3. GTP contacts are provided by residues 101 to 105 (DLPGH) and 163 to 166 (NKMD). The segment at 163–166 (NKMD) is G4. Residues 202–204 (SAV) are G5.

This sequence belongs to the TRAFAC class translation factor GTPase superfamily. Classic translation factor GTPase family. EF-Tu/EF-1A subfamily.

Its subcellular location is the cytoplasm. The enzyme catalyses GTP + H2O = GDP + phosphate + H(+). In terms of biological role, GTP hydrolase that promotes the GTP-dependent binding of aminoacyl-tRNA to the A-site of ribosomes during protein biosynthesis. This is Elongation factor 1-alpha from Pyrobaculum arsenaticum (strain DSM 13514 / JCM 11321 / PZ6).